The following is a 122-amino-acid chain: Large ribosomal subunit protein uL18 (122 aa).

Belongs to the universal ribosomal protein uL18 family. Part of the 50S ribosomal subunit; part of the 5S rRNA/L5/L18/L25 subcomplex. Contacts the 5S and 23S rRNAs.

This is one of the proteins that bind and probably mediate the attachment of the 5S RNA into the large ribosomal subunit, where it forms part of the central protuberance. This Prochlorococcus marinus (strain AS9601) protein is Large ribosomal subunit protein uL18.